The following is a 184-amino-acid chain: UPF0340 protein TTE0860 (184 aa).

The protein belongs to the UPF0340 family.

The chain is UPF0340 protein TTE0860 from Caldanaerobacter subterraneus subsp. tengcongensis (strain DSM 15242 / JCM 11007 / NBRC 100824 / MB4) (Thermoanaerobacter tengcongensis).